Reading from the N-terminus, the 339-residue chain is DNA repair protein RAD51 homolog 1 (339 aa).

Residues 1 to 23 (MAMQVQFEASTDTSAEEESFGPE) are disordered. The region spanning 48 to 77 (TVESVAHAPKKELLNIKGISEAKADKILAE) is the HhH domain. An ATP-binding site is contributed by 127–134 (GEFRTGKT).

This sequence belongs to the RecA family. RAD51 subfamily. In terms of assembly, forms linear homooligomers, giving rise to a RAD51 nucleoprotein filament, which is essential for strand-pairing reactions during DNA recombination. In terms of tissue distribution, expressed at high levels in lymphoid and reproductive organs.

It is found in the nucleus. It localises to the cytoplasm. The protein resides in the chromosome. Functionally, plays an important role in homologous strand exchange, a key step in DNA repair through homologous recombination (HR). Binds to single-stranded DNA in an ATP-dependent manner to form nucleoprotein filaments which are essential for the homology search and strand exchange. Catalyzes the recognition of homology and strand exchange between homologous DNA partners to form a joint molecule between a processed DNA break and the repair template. Recruited to resolve stalled replication forks during replication stress. Also involved in interstrand cross-link repair. In Gallus gallus (Chicken), this protein is DNA repair protein RAD51 homolog 1 (RAD51A).